The primary structure comprises 70 residues: Large ribosomal subunit protein uL29 (70 aa).

This sequence belongs to the universal ribosomal protein uL29 family.

This is Large ribosomal subunit protein uL29 from Clostridium botulinum (strain ATCC 19397 / Type A).